The following is a 286-amino-acid chain: Meiotically up-regulated gene 64 protein (286 aa).

Its subcellular location is the cytoplasm. Its function is as follows. Has a role in meiosis. In Schizosaccharomyces pombe (strain 972 / ATCC 24843) (Fission yeast), this protein is Meiotically up-regulated gene 64 protein (mug64).